Reading from the N-terminus, the 478-residue chain is Glycogen synthase (478 aa).

Lysine 15 contributes to the ADP-alpha-D-glucose binding site.

The protein belongs to the glycosyltransferase 1 family. Bacterial/plant glycogen synthase subfamily.

The catalysed reaction is [(1-&gt;4)-alpha-D-glucosyl](n) + ADP-alpha-D-glucose = [(1-&gt;4)-alpha-D-glucosyl](n+1) + ADP + H(+). It participates in glycan biosynthesis; glycogen biosynthesis. Functionally, synthesizes alpha-1,4-glucan chains using ADP-glucose. This chain is Glycogen synthase, found in Lactococcus lactis subsp. lactis (strain IL1403) (Streptococcus lactis).